Reading from the N-terminus, the 337-residue chain is Ketol-acid reductoisomerase (NADP(+)) (337 aa).

The 180-residue stretch at 1 to 180 (MQVYYDKDAD…GGTKGGVIET (180 aa)) folds into the KARI N-terminal Rossmann domain. Residues 24–27 (YGSQ), arginine 47, and serine 51 contribute to the NADP(+) site. Histidine 106 is an active-site residue. Glycine 132 serves as a coordination point for NADP(+). A KARI C-terminal knotted domain is found at 181-326 (TFREETETDL…ARLRAMMPWI (146 aa)). Mg(2+) contacts are provided by aspartate 189, glutamate 193, glutamate 225, and glutamate 229. Serine 250 is a binding site for substrate.

It belongs to the ketol-acid reductoisomerase family. Mg(2+) serves as cofactor.

It catalyses the reaction (2R)-2,3-dihydroxy-3-methylbutanoate + NADP(+) = (2S)-2-acetolactate + NADPH + H(+). The catalysed reaction is (2R,3R)-2,3-dihydroxy-3-methylpentanoate + NADP(+) = (S)-2-ethyl-2-hydroxy-3-oxobutanoate + NADPH + H(+). It participates in amino-acid biosynthesis; L-isoleucine biosynthesis; L-isoleucine from 2-oxobutanoate: step 2/4. Its pathway is amino-acid biosynthesis; L-valine biosynthesis; L-valine from pyruvate: step 2/4. Functionally, involved in the biosynthesis of branched-chain amino acids (BCAA). Catalyzes an alkyl-migration followed by a ketol-acid reduction of (S)-2-acetolactate (S2AL) to yield (R)-2,3-dihydroxy-isovalerate. In the isomerase reaction, S2AL is rearranged via a Mg-dependent methyl migration to produce 3-hydroxy-3-methyl-2-ketobutyrate (HMKB). In the reductase reaction, this 2-ketoacid undergoes a metal-dependent reduction by NADPH to yield (R)-2,3-dihydroxy-isovalerate. The polypeptide is Ketol-acid reductoisomerase (NADP(+)) (Neisseria gonorrhoeae (strain ATCC 700825 / FA 1090)).